We begin with the raw amino-acid sequence, 163 residues long: Peptidyl-prolyl cis-trans isomerase-like 1 (163 aa).

The PPIase cyclophilin-type domain maps to 1–155 (MATDVAVETT…TEVKIVKARV (155 aa)).

This sequence belongs to the cyclophilin-type PPIase family. PPIL1 subfamily.

It catalyses the reaction [protein]-peptidylproline (omega=180) = [protein]-peptidylproline (omega=0). Its function is as follows. PPIases accelerate the folding of proteins. It catalyzes the cis-trans isomerization of proline imidic peptide bonds in oligopeptides. The protein is Peptidyl-prolyl cis-trans isomerase-like 1 (ppi-1) of Neurospora crassa (strain ATCC 24698 / 74-OR23-1A / CBS 708.71 / DSM 1257 / FGSC 987).